A 172-amino-acid chain; its full sequence is Envelope protein UL45 (172 aa).

Residues 1 to 27 lie on the Intravirion side of the membrane; sequence MPLRASEHAYRPLGPGTPPMRARLPAA. Residues 28–48 form a helical; Signal-anchor for type II membrane protein membrane-spanning segment; it reads AWVGVGTIIGGVVIIAALVLV. The Virion surface portion of the chain corresponds to 49–172; the sequence is PSRASWALSP…TSTRNALGLP (124 aa).

The protein belongs to the herpesviridae HHV-1 UL45 family.

Its subcellular location is the virion membrane. In terms of biological role, important virulence factor of HSV neurotropism. Seems to be required for glycoprotein B-induced fusion. Dispensable for growth in vitro. This chain is Envelope protein UL45, found in Human herpesvirus 1 (strain 17) (HHV-1).